The primary structure comprises 103 residues: Large ribosomal subunit protein eL14 (103 aa).

The protein belongs to the eukaryotic ribosomal protein eL14 family.

The chain is Large ribosomal subunit protein eL14 from Pyrobaculum arsenaticum (strain DSM 13514 / JCM 11321 / PZ6).